We begin with the raw amino-acid sequence, 275 residues long: Large ribosomal subunit protein uL2 (275 aa).

The tract at residues 225–275 (MNPIDHPHGGGEGRTSGGRHPVTPWGKPTKGKKTRSNKKTDRLIMRRRQTQ) is disordered.

Belongs to the universal ribosomal protein uL2 family. In terms of assembly, part of the 50S ribosomal subunit. Forms a bridge to the 30S subunit in the 70S ribosome.

In terms of biological role, one of the primary rRNA binding proteins. Required for association of the 30S and 50S subunits to form the 70S ribosome, for tRNA binding and peptide bond formation. It has been suggested to have peptidyltransferase activity; this is somewhat controversial. Makes several contacts with the 16S rRNA in the 70S ribosome. The protein is Large ribosomal subunit protein uL2 of Paramagnetospirillum magneticum (strain ATCC 700264 / AMB-1) (Magnetospirillum magneticum).